Reading from the N-terminus, the 433-residue chain is Trigger factor (433 aa).

Residues 163–248 (GDTVNIDFSG…VNEIKFKEVP (86 aa)) form the PPIase FKBP-type domain.

It belongs to the FKBP-type PPIase family. Tig subfamily.

It is found in the cytoplasm. It catalyses the reaction [protein]-peptidylproline (omega=180) = [protein]-peptidylproline (omega=0). Involved in protein export. Acts as a chaperone by maintaining the newly synthesized protein in an open conformation. Functions as a peptidyl-prolyl cis-trans isomerase. The protein is Trigger factor of Staphylococcus aureus (strain bovine RF122 / ET3-1).